A 624-amino-acid polypeptide reads, in one-letter code: Polycomb group protein EMF2A (624 aa).

Residues 338–359 form a C2H2-type zinc finger; sequence CPFCLVRCGNFKGLECHMTSSH. The tract at residues 420–445 is disordered; it reads DAHIMESGSPEETQAESEDDVQEENE. The segment covering 432–445 has biased composition (acidic residues); the sequence is TQAESEDDVQEENE. The tract at residues 474 to 609 is VEFS-box; that stretch reads LSANRADPRN…SARTMDTCNR (136 aa).

It belongs to the VEFS (VRN2-EMF2-FIS2-SU(Z)12) family. In terms of assembly, component of the polycomb repressive complex 2 (PRC2), which methylates 'Lys-27' residues of histone H3 (H3K27me3), leading to transcriptional repression of the affected target gene. As to expression, widely expressed. Highly expressed in shoot apical meristem and inflorescence meristem. Expressed in roots, leaves and immature seeds.

Polycomb group (PcG) protein. PcG proteins act by forming multiprotein complexes, which are required to maintain the transcriptionally repressive state of homeotic genes throughout development. PcG proteins are not required to initiate repression, but to maintain it during later stages of development. They act via the methylation of histones, rendering chromatin heritably changed in its expressibility. In Oryza sativa subsp. japonica (Rice), this protein is Polycomb group protein EMF2A.